The following is a 232-amino-acid chain: Flagellar L-ring protein (232 aa).

An N-terminal signal peptide occupies residues 1–21 (MQKNAAHTYAISSLLVLSLTG). Residue C22 is the site of N-palmitoyl cysteine attachment. C22 carries S-diacylglycerol cysteine lipidation.

This sequence belongs to the FlgH family. As to quaternary structure, the basal body constitutes a major portion of the flagellar organelle and consists of four rings (L,P,S, and M) mounted on a central rod.

It localises to the cell outer membrane. The protein resides in the bacterial flagellum basal body. Its function is as follows. Assembles around the rod to form the L-ring and probably protects the motor/basal body from shearing forces during rotation. The protein is Flagellar L-ring protein of Shigella dysenteriae serotype 1 (strain Sd197).